The chain runs to 131 residues: MSEIPADLSYTEEHEWVQRTGDDTVRVGITDYAQAALGDVVFVQLPDVDAALTAGESFGEVESTKSVSDLYAPLTAKVVAVNGDLESNPQLVNSDPYGEGWLVELQADSASLDAALAELFDAEGYRGHVAD.

A Lipoyl-binding domain is found at 24 to 106 (TVRVGITDYA…YGEGWLVELQ (83 aa)). Lysine 65 carries the post-translational modification N6-lipoyllysine.

It belongs to the GcvH family. In terms of assembly, the glycine cleavage system is composed of four proteins: P, T, L and H. (R)-lipoate serves as cofactor.

The glycine cleavage system catalyzes the degradation of glycine. The H protein shuttles the methylamine group of glycine from the P protein to the T protein. The polypeptide is Glycine cleavage system H protein (Mycolicibacterium gilvum (strain PYR-GCK) (Mycobacterium gilvum (strain PYR-GCK))).